A 246-amino-acid polypeptide reads, in one-letter code: uncharacterized protein (246 aa).

This sequence to M.jannaschii MJ1676.

This is an uncharacterized protein from Methanothermobacter thermautotrophicus (strain ATCC 29096 / DSM 1053 / JCM 10044 / NBRC 100330 / Delta H) (Methanobacterium thermoautotrophicum).